The primary structure comprises 152 residues: Ribosomal RNA large subunit methyltransferase H (152 aa).

Residues leucine 70, glycine 102, and 120-125 (LSPMTF) each bind S-adenosyl-L-methionine.

It belongs to the RNA methyltransferase RlmH family. In terms of assembly, homodimer.

The protein localises to the cytoplasm. The catalysed reaction is pseudouridine(1915) in 23S rRNA + S-adenosyl-L-methionine = N(3)-methylpseudouridine(1915) in 23S rRNA + S-adenosyl-L-homocysteine + H(+). Specifically methylates the pseudouridine at position 1915 (m3Psi1915) in 23S rRNA. The protein is Ribosomal RNA large subunit methyltransferase H of Pelobacter propionicus (strain DSM 2379 / NBRC 103807 / OttBd1).